Here is a 1755-residue protein sequence, read N- to C-terminus: Transposon Ty1-DR1 Gag-Pol polyprotein (1755 aa).

Polar residues-rich tracts occupy residues 1 to 10 (MESQQLSNYP), 48 to 60 (TKAN…TPAS), and 127 to 152 (QSQF…GNTF). Disordered regions lie at residues 1 to 93 (MESQ…MMTQ), 126 to 173 (PQSQ…RPPP), and 352 to 421 (GSRN…SKST). The span at 153–165 (TDSSSADSDMTST) shows a compositional bias: low complexity. The interval 299 to 401 (NNGIHINNKV…NSKSKTARAH (103 aa)) is RNA-binding. Residues 402–418 (NVSTSNNSPSTDNDSIS) are compositionally biased toward low complexity. The residue at position 416 (Ser-416) is a Phosphoserine. Asp-461 acts as the For protease activity; shared with dimeric partner in catalysis. Positions 583–640 (NVHTSESTRKYPYPFIHRMLAHANAQTIRYSLKNNTITYFNESDVDWSSAIDYQCPDC) are integrase-type zinc finger-like. The region spanning 660–835 (NSYEPFQYLH…AGLDISTLLP (176 aa)) is the Integrase catalytic domain. 2 residues coordinate Mg(2+): Asp-671 and Asp-736. 3 disordered regions span residues 956–1087 (SKAV…ETEK), 1092–1111 (RSPS…NIVP), and 1130–1187 (DLPL…DNET). The span at 960-969 (SPTDSTPPST) shows a compositional bias: low complexity. Polar residues predominate over residues 1005-1015 (STPQISNIEST). Residues 1038-1053 (ESSHASKSKDFRHSDS) show a composition bias toward basic and acidic residues. Composition is skewed to polar residues over residues 1054-1082 (YSEN…QISD) and 1101-1111 (PENNSSHNIVP). The short motif at 1178-1212 (KKRSLEDNETEIKVSRDTWNTKNMRSLEPPRSKKR) is the Bipartite nuclear localization signal element. One can recognise a Reverse transcriptase Ty1/copia-type domain in the interval 1338–1476 (NNYYITQLDI…DILGLEIKYQ (139 aa)). 6 residues coordinate Mg(2+): Asp-1346, Asp-1427, Asp-1428, Asp-1610, Glu-1652, and Asp-1685. Residues 1610–1752 (DASYGNQPYY…IKTFKLLTNK (143 aa)) form the RNase H Ty1/copia-type domain.

As to quaternary structure, the capsid protein forms a homotrimer, from which the VLPs are assembled. The protease is a homodimer, whose active site consists of two apposed aspartic acid residues. In terms of processing, initially, virus-like particles (VLPs) are composed of the structural unprocessed proteins Gag and Gag-Pol, and also contain the host initiator methionine tRNA (tRNA(i)-Met) which serves as a primer for minus-strand DNA synthesis, and a dimer of genomic Ty RNA. Processing of the polyproteins occurs within the particle and proceeds by an ordered pathway, called maturation. First, the protease (PR) is released by autocatalytic cleavage of the Gag-Pol polyprotein yielding capsid protein p45 and a Pol-p154 precursor protein. This cleavage is a prerequisite for subsequent processing of Pol-p154 at the remaining sites to release the mature structural and catalytic proteins. Maturation takes place prior to the RT reaction and is required to produce transposition-competent VLPs.

The protein localises to the cytoplasm. Its subcellular location is the nucleus. The catalysed reaction is DNA(n) + a 2'-deoxyribonucleoside 5'-triphosphate = DNA(n+1) + diphosphate. It carries out the reaction Endonucleolytic cleavage to 5'-phosphomonoester.. Its function is as follows. Capsid protein (CA) is the structural component of the virus-like particle (VLP), forming the shell that encapsulates the retrotransposons dimeric RNA genome. The particles are assembled from trimer-clustered units and there are holes in the capsid shells that allow for the diffusion of macromolecules. CA also has nucleocapsid-like chaperone activity, promoting primer tRNA(i)-Met annealing to the multipartite primer-binding site (PBS), dimerization of Ty1 RNA and initiation of reverse transcription. Functionally, the aspartyl protease (PR) mediates the proteolytic cleavages of the Gag and Gag-Pol polyproteins after assembly of the VLP. Reverse transcriptase/ribonuclease H (RT) is a multifunctional enzyme that catalyzes the conversion of the retro-elements RNA genome into dsDNA within the VLP. The enzyme displays a DNA polymerase activity that can copy either DNA or RNA templates, and a ribonuclease H (RNase H) activity that cleaves the RNA strand of RNA-DNA heteroduplexes during plus-strand synthesis and hydrolyzes RNA primers. The conversion leads to a linear dsDNA copy of the retrotransposon that includes long terminal repeats (LTRs) at both ends. In terms of biological role, integrase (IN) targets the VLP to the nucleus, where a subparticle preintegration complex (PIC) containing at least integrase and the newly synthesized dsDNA copy of the retrotransposon must transit the nuclear membrane. Once in the nucleus, integrase performs the integration of the dsDNA into the host genome. The protein is Transposon Ty1-DR1 Gag-Pol polyprotein (TY1B-DR1) of Saccharomyces cerevisiae (strain ATCC 204508 / S288c) (Baker's yeast).